Consider the following 406-residue polypeptide: CinA-like protein (406 aa).

Belongs to the CinA family.

The protein is CinA-like protein of Pseudothermotoga lettingae (strain ATCC BAA-301 / DSM 14385 / NBRC 107922 / TMO) (Thermotoga lettingae).